The sequence spans 137 residues: Golgin subfamily A member 7 (137 aa).

2 S-palmitoyl cysteine lipidation sites follow: Cys69 and Cys72.

It belongs to the ERF4 family. As to quaternary structure, interacts with ZDHHC9.

Its subcellular location is the golgi apparatus membrane. Its function is as follows. May be involved in protein transport from Golgi to cell surface. The ZDHHC9-GOLGA7 complex is a palmitoyltransferase specific for HRAS and NRAS. This is Golgin subfamily A member 7 (GOLGA7) from Gallus gallus (Chicken).